Here is a 469-residue protein sequence, read N- to C-terminus: Equisetin cluster transcription factor eqxR (469 aa).

Residues 13 to 47 constitute a DNA-binding region (zn(2)-C6 fungal-type); that stretch reads CDRCRSHKLKCTVAPENSRSGSNRCTRCIRAQVTC. The segment at 58-84 is disordered; sequence STNVKKADIKSGTNSQETTSMQASTIV. Over residues 68–82 the composition is skewed to polar residues; the sequence is SGTNSQETTSMQAST.

The protein localises to the nucleus. Functionally, transcription factor that regulates the expression of the gene cluster that mediates the biosynthesis of Equisetin. This is Equisetin cluster transcription factor eqxR from Fusarium heterosporum.